Reading from the N-terminus, the 519-residue chain is Baeyer-Villiger monooxygenase (519 aa).

Residues E41, 49–52 (TWRD), D61, Y67, and V110 contribute to the FAD site. An NADP(+)-binding site is contributed by 59–61 (ACD). NADP(+) is bound by residues 183 to 189 (TGASAIQ), 206 to 207 (RT), and 292 to 293 (KR). M399 contacts FAD. The tract at residues 499–519 (GAKAAEADTGADTGADAEVSA) is disordered.

It belongs to the FAD-binding monooxygenase family. It depends on FAD as a cofactor.

In terms of biological role, catalyzes a Baeyer-Villiger oxidation reaction, i.e. the insertion of an oxygen atom into a carbon-carbon bond adjacent to a carbonyl, which converts ketones to esters or lactones using NADPH and/or NADH as an electron donor. Thus, can convert bicyclo[3.2.0]hept-2-en-6-one into the oxidative lactone products 2-oxabicyclo[3.3.0]oct-6-en-3-one and 3-oxabicyclo[3.3.0]oct-6-en-2-one. Is also able to catalyze the sulfoxidation of methyl phenyl sulfide (thioanisole). The protein is Baeyer-Villiger monooxygenase of Streptomyces coelicolor (strain ATCC BAA-471 / A3(2) / M145).